Here is a 405-residue protein sequence, read N- to C-terminus: Argininosuccinate synthase (405 aa).

ATP-binding positions include 10–18 (AYSGGLDTS) and Ala-37. L-citrulline contacts are provided by Tyr-88 and Ser-93. Residue Gly-118 coordinates ATP. 3 residues coordinate L-aspartate: Thr-120, Asn-124, and Asp-125. Asn-124 provides a ligand contact to L-citrulline. 5 residues coordinate L-citrulline: Arg-128, Ser-179, Ser-188, Glu-264, and Tyr-276.

The protein belongs to the argininosuccinate synthase family. Type 1 subfamily. Homotetramer.

It localises to the cytoplasm. The catalysed reaction is L-citrulline + L-aspartate + ATP = 2-(N(omega)-L-arginino)succinate + AMP + diphosphate + H(+). It participates in amino-acid biosynthesis; L-arginine biosynthesis; L-arginine from L-ornithine and carbamoyl phosphate: step 2/3. The polypeptide is Argininosuccinate synthase (Pseudomonas savastanoi pv. phaseolicola (strain 1448A / Race 6) (Pseudomonas syringae pv. phaseolicola (strain 1448A / Race 6))).